A 208-amino-acid chain; its full sequence is Probable GTP-binding protein EngB (208 aa).

The region spanning 22–195 (GLPEIALAGR…WGALEDIFVE (174 aa)) is the EngB-type G domain. GTP-binding positions include 30-37 (GRSNVGKS), 57-61 (GKTRT), 75-78 (DLPG), 142-145 (TKSD), and 174-176 (ISS). Mg(2+) contacts are provided by serine 37 and threonine 59.

This sequence belongs to the TRAFAC class TrmE-Era-EngA-EngB-Septin-like GTPase superfamily. EngB GTPase family. Mg(2+) serves as cofactor.

In terms of biological role, necessary for normal cell division and for the maintenance of normal septation. The chain is Probable GTP-binding protein EngB from Alkaliphilus metalliredigens (strain QYMF).